The primary structure comprises 362 residues: Alpha-2-HS-glycoprotein (362 aa).

Residues 1 to 15 (LILFFCLAQLWGCRA) form the signal peptide. The Cystatin fetuin-A-type 1 domain maps to 24–130 (YREPACDDVE…QFSVLFAKCD (107 aa)). Intrachain disulfides connect C29–C353, C86–C97, C111–C129, C143–C146, C205–C216, and C227–C244. The N-linked (GlcNAc...) asparagine glycan is linked to N96. Residues S131, S132, and S135 each carry the phosphoserine modification. A Cystatin fetuin-A-type 2 domain is found at 141 to 252 (KVCPNCPLLA…TCTVFQTQPV (112 aa)). Residues N153 and N173 are each glycosylated (N-linked (GlcNAc...) asparagine). Phosphoserine occurs at positions 314, 318, 321, and 323. O-linked (GalNAc...) threonine glycosylation is present at T332.

This sequence belongs to the fetuin family. In terms of processing, phosphorylated by FAM20C in the extracellular medium. As to expression, expressed by the liver and secreted in plasma.

The protein localises to the secreted. This Sus scrofa (Pig) protein is Alpha-2-HS-glycoprotein (AHSG).